Reading from the N-terminus, the 130-residue chain is ATP synthase epsilon chain (130 aa).

It belongs to the ATPase epsilon chain family. In terms of assembly, F-type ATPases have 2 components, CF(1) - the catalytic core - and CF(0) - the membrane proton channel. CF(1) has five subunits: alpha(3), beta(3), gamma(1), delta(1), epsilon(1). CF(0) has three main subunits: a, b and c.

It is found in the cell inner membrane. Functionally, produces ATP from ADP in the presence of a proton gradient across the membrane. The sequence is that of ATP synthase epsilon chain from Sulfurimonas denitrificans (strain ATCC 33889 / DSM 1251) (Thiomicrospira denitrificans (strain ATCC 33889 / DSM 1251)).